The sequence spans 129 residues: Small ribosomal subunit protein uS12 (129 aa).

D89 carries the 3-methylthioaspartic acid modification. Residues 110 to 129 form a disordered region; sequence RKQGRSRYGAPRKQVVATKK.

It belongs to the universal ribosomal protein uS12 family. Part of the 30S ribosomal subunit. Contacts proteins S8 and S17. May interact with IF1 in the 30S initiation complex.

With S4 and S5 plays an important role in translational accuracy. Functionally, interacts with and stabilizes bases of the 16S rRNA that are involved in tRNA selection in the A site and with the mRNA backbone. Located at the interface of the 30S and 50S subunits, it traverses the body of the 30S subunit contacting proteins on the other side and probably holding the rRNA structure together. The combined cluster of proteins S8, S12 and S17 appears to hold together the shoulder and platform of the 30S subunit. This chain is Small ribosomal subunit protein uS12, found in Rickettsia bellii (strain OSU 85-389).